A 569-amino-acid chain; its full sequence is Undecaprenyl phosphate-alpha-4-amino-4-deoxy-L-arabinose arabinosyl transferase 1 (569 aa).

Transmembrane regions (helical) follow at residues Gly-27–Ile-47, Leu-98–Ala-120, Ile-129–Tyr-149, Asn-151–Ile-171, Leu-194–Leu-214, Tyr-225–His-245, Pro-275–Pro-295, Ala-311–Leu-331, Tyr-334–Leu-354, Gly-366–Thr-386, Phe-396–Val-416, and Leu-420–Ala-440.

This sequence belongs to the glycosyltransferase 83 family.

It is found in the cell inner membrane. The enzyme catalyses 4-amino-4-deoxy-alpha-L-arabinopyranosyl di-trans,octa-cis-undecaprenyl phosphate + lipid IVA = lipid IIA + di-trans,octa-cis-undecaprenyl phosphate.. The protein operates within lipopolysaccharide metabolism; 4-amino-4-deoxy-beta-L-arabinose-lipid A biosynthesis. Functionally, catalyzes the transfer of the L-Ara4N moiety of the glycolipid undecaprenyl phosphate-alpha-L-Ara4N to lipid A. The modified arabinose is attached to lipid A and is required for resistance to polymyxin and cationic antimicrobial peptides. The chain is Undecaprenyl phosphate-alpha-4-amino-4-deoxy-L-arabinose arabinosyl transferase 1 from Pseudomonas fluorescens (strain Pf0-1).